The sequence spans 85 residues: Protein Vpu (85 aa).

Residues 1-7 (MHQENLL) lie on the Extracellular side of the membrane. A helical transmembrane segment spans residues 8–28 (ALIALSALCLINVLIWLFNLR). The Cytoplasmic segment spans residues 29-85 (IYLVQRKQDRREQEILERLRRIKEIRDDSDYESNEEEQQEVMELIHSHGFANPMFEL).

This sequence belongs to the HIV-1 VPU protein family. As to quaternary structure, homopentamer. Interacts with host CD4 and BRTC; these interactions induce proteasomal degradation of CD4. Interacts with host BST2; this interaction leads to the degradation of host BST2. Interacts with host FBXW11. Interacts with host AP1M1; this interaction plays a role in the mistrafficking and subsequent degradation of host BST2. Interacts with host RANBP2; this interaction allows Vpu to down-regulate host BLM sumoylation. Post-translationally, phosphorylated by host CK2. This phosphorylation is necessary for interaction with human BTRC and degradation of CD4.

The protein localises to the host membrane. With respect to regulation, ion channel activity is inhibited by hexamethylene amiloride in vitro. Functionally, enhances virion budding by targeting host CD4 and Tetherin/BST2 to proteasome degradation. Degradation of CD4 prevents any unwanted premature interactions between viral Env and its host receptor CD4 in the endoplasmic reticulum. Degradation of antiretroviral protein Tetherin/BST2 is important for virion budding, as BST2 tethers new viral particles to the host cell membrane. Mechanistically, Vpu bridges either CD4 or BST2 to BTRC, a substrate recognition subunit of the Skp1/Cullin/F-box protein E3 ubiquitin ligase, induces their ubiquitination and subsequent proteasomal degradation. The alteration of the E3 ligase specificity by Vpu seems to promote the degradation of host IKBKB, leading to NF-kappa-B down-regulation and subsequent apoptosis. Acts as a viroporin that forms an oligomeric ion channel in membranes. Modulates the host DNA repair mechanisms to promote degradation of nuclear viral cDNA in cells that are already productively infected in order to suppress immune sensing and proviral hyper-integration (superinfection). Manipulates PML-NBs and modulates SUMOylation of host BLM protein thereby enhancing its DNA-end processing activity toward viral unintegrated linear DNA. Also inhibits RAD52-mediated homologous repair of viral cDNA, preventing the generation of dead-end circular forms of single copies of the long terminal repeat and permitting sustained nucleolytic attack. The polypeptide is Protein Vpu (Human immunodeficiency virus type 1 group O (isolate MVP5180) (HIV-1)).